Reading from the N-terminus, the 300-residue chain is Coatomer subunit epsilon (300 aa).

Belongs to the COPE family. Oligomeric complex that consists of at least the alpha, beta, beta', gamma, delta, epsilon and zeta subunits.

It localises to the cytoplasm. The protein localises to the golgi apparatus membrane. The protein resides in the cytoplasmic vesicle. Its subcellular location is the COPI-coated vesicle membrane. The coatomer is a cytosolic protein complex that binds to dilysine motifs and reversibly associates with Golgi non-clathrin-coated vesicles, which further mediate biosynthetic protein transport from the ER, via the Golgi up to the trans Golgi network. The coatomer complex is required for budding from Golgi membranes, and is essential for the retrograde Golgi-to-ER transport of dilysine-tagged proteins. This is Coatomer subunit epsilon (cope) from Dictyostelium discoideum (Social amoeba).